Consider the following 173-residue polypeptide: Crossover junction endodeoxyribonuclease RuvC (173 aa).

Catalysis depends on residues D8, E67, and D139. Residues D8, E67, and D139 each coordinate Mg(2+).

This sequence belongs to the RuvC family. As to quaternary structure, homodimer which binds Holliday junction (HJ) DNA. The HJ becomes 2-fold symmetrical on binding to RuvC with unstacked arms; it has a different conformation from HJ DNA in complex with RuvA. In the full resolvosome a probable DNA-RuvA(4)-RuvB(12)-RuvC(2) complex forms which resolves the HJ. The cofactor is Mg(2+).

It localises to the cytoplasm. It catalyses the reaction Endonucleolytic cleavage at a junction such as a reciprocal single-stranded crossover between two homologous DNA duplexes (Holliday junction).. In terms of biological role, the RuvA-RuvB-RuvC complex processes Holliday junction (HJ) DNA during genetic recombination and DNA repair. Endonuclease that resolves HJ intermediates. Cleaves cruciform DNA by making single-stranded nicks across the HJ at symmetrical positions within the homologous arms, yielding a 5'-phosphate and a 3'-hydroxyl group; requires a central core of homology in the junction. The consensus cleavage sequence is 5'-(A/T)TT(C/G)-3'. Cleavage occurs on the 3'-side of the TT dinucleotide at the point of strand exchange. HJ branch migration catalyzed by RuvA-RuvB allows RuvC to scan DNA until it finds its consensus sequence, where it cleaves and resolves the cruciform DNA. The protein is Crossover junction endodeoxyribonuclease RuvC of Aeromonas hydrophila subsp. hydrophila (strain ATCC 7966 / DSM 30187 / BCRC 13018 / CCUG 14551 / JCM 1027 / KCTC 2358 / NCIMB 9240 / NCTC 8049).